A 130-amino-acid chain; its full sequence is uncharacterized protein (130 aa).

A helical transmembrane segment spans residues 15-31 (LYLCPAIIRLSSVCTLA).

The protein resides in the membrane. This is an uncharacterized protein from Saccharomyces cerevisiae (strain ATCC 204508 / S288c) (Baker's yeast).